The chain runs to 126 residues: Fluoride-specific ion channel FluC (126 aa).

4 helical membrane passes run 1–21 (MTATAFVAIGGGIGAVLRFHA), 33–53 (AVFPWGTFAINVVGSLLMGVL), 72–92 (VGVLGGFTTFSAFSLETALLV), and 97–117 (IGLAALYAAGSVVAGVTGLFL). Positions 76 and 79 each coordinate Na(+).

Belongs to the fluoride channel Fluc/FEX (TC 1.A.43) family.

The protein localises to the cell inner membrane. It carries out the reaction fluoride(in) = fluoride(out). Na(+) is not transported, but it plays an essential structural role and its presence is essential for fluoride channel function. In terms of biological role, fluoride-specific ion channel. Important for reducing fluoride concentration in the cell, thus reducing its toxicity. This is Fluoride-specific ion channel FluC from Novosphingobium aromaticivorans (strain ATCC 700278 / DSM 12444 / CCUG 56034 / CIP 105152 / NBRC 16084 / F199).